The sequence spans 345 residues: tRNA-specific 2-thiouridylase MnmA (345 aa).

ATP is bound by residues 6-13 (LMSGGVDS) and Leu-32. Catalysis depends on Cys-92, which acts as the Nucleophile. An intrachain disulfide couples Cys-92 to Cys-191. Gly-116 contacts ATP. The interval 138-140 (KDQ) is interaction with tRNA. Cys-191 (cysteine persulfide intermediate) is an active-site residue. The interaction with tRNA stretch occupies residues 293–294 (RY).

The protein belongs to the MnmA/TRMU family.

The protein resides in the cytoplasm. It catalyses the reaction S-sulfanyl-L-cysteinyl-[protein] + uridine(34) in tRNA + AH2 + ATP = 2-thiouridine(34) in tRNA + L-cysteinyl-[protein] + A + AMP + diphosphate + H(+). Catalyzes the 2-thiolation of uridine at the wobble position (U34) of tRNA, leading to the formation of s(2)U34. The protein is tRNA-specific 2-thiouridylase MnmA of Helicobacter hepaticus (strain ATCC 51449 / 3B1).